Here is a 750-residue protein sequence, read N- to C-terminus: Polyribonucleotide nucleotidyltransferase (750 aa).

2 residues coordinate Mg(2+): D523 and D529. The KH domain maps to P589–I648. The S1 motif domain occupies G660–V729.

The protein belongs to the polyribonucleotide nucleotidyltransferase family. The cofactor is Mg(2+).

The protein resides in the cytoplasm. The enzyme catalyses RNA(n+1) + phosphate = RNA(n) + a ribonucleoside 5'-diphosphate. Involved in mRNA degradation. Catalyzes the phosphorolysis of single-stranded polyribonucleotides processively in the 3'- to 5'-direction. The polypeptide is Polyribonucleotide nucleotidyltransferase (Saccharopolyspora erythraea (strain ATCC 11635 / DSM 40517 / JCM 4748 / NBRC 13426 / NCIMB 8594 / NRRL 2338)).